We begin with the raw amino-acid sequence, 432 residues long: Adenylosuccinate synthetase (432 aa).

Residues 12-18 (GDEGKGK) and 40-42 (GHT) each bind GTP. Aspartate 13 acts as the Proton acceptor in catalysis. Mg(2+) contacts are provided by aspartate 13 and glycine 40. Residues 13 to 16 (DEGK), 38 to 41 (NAGH), threonine 132, arginine 146, glutamine 226, threonine 241, and arginine 305 contribute to the IMP site. Histidine 41 functions as the Proton donor in the catalytic mechanism. 301–307 (TVTGRKR) is a substrate binding site. GTP-binding positions include arginine 307, 333–335 (KLD), and 415–417 (STS).

The protein belongs to the adenylosuccinate synthetase family. As to quaternary structure, homodimer. Mg(2+) serves as cofactor.

The protein resides in the cytoplasm. It carries out the reaction IMP + L-aspartate + GTP = N(6)-(1,2-dicarboxyethyl)-AMP + GDP + phosphate + 2 H(+). It participates in purine metabolism; AMP biosynthesis via de novo pathway; AMP from IMP: step 1/2. Its function is as follows. Plays an important role in the de novo pathway of purine nucleotide biosynthesis. Catalyzes the first committed step in the biosynthesis of AMP from IMP. The chain is Adenylosuccinate synthetase from Agrobacterium fabrum (strain C58 / ATCC 33970) (Agrobacterium tumefaciens (strain C58)).